Here is a 281-residue protein sequence, read N- to C-terminus: Formamidopyrimidine-DNA glycosylase (281 aa).

The active-site Schiff-base intermediate with DNA is the P2. Catalysis depends on E3, which acts as the Proton donor. The Proton donor; for beta-elimination activity role is filled by K58. DNA contacts are provided by H94, R113, and R156. The segment at A241–R281 adopts an FPG-type; degenerate zinc-finger fold. The active-site Proton donor; for delta-elimination activity is R271.

The protein belongs to the FPG family. As to quaternary structure, monomer. Zn(2+) serves as cofactor.

It catalyses the reaction Hydrolysis of DNA containing ring-opened 7-methylguanine residues, releasing 2,6-diamino-4-hydroxy-5-(N-methyl)formamidopyrimidine.. It carries out the reaction 2'-deoxyribonucleotide-(2'-deoxyribose 5'-phosphate)-2'-deoxyribonucleotide-DNA = a 3'-end 2'-deoxyribonucleotide-(2,3-dehydro-2,3-deoxyribose 5'-phosphate)-DNA + a 5'-end 5'-phospho-2'-deoxyribonucleoside-DNA + H(+). Involved in base excision repair of DNA damaged by oxidation or by mutagenic agents. Acts as a DNA glycosylase that recognizes and removes damaged bases. Has a preference for oxidized purines, such as 7,8-dihydro-8-oxoguanine (8-oxoG). Has AP (apurinic/apyrimidinic) lyase activity and introduces nicks in the DNA strand. Cleaves the DNA backbone by beta-delta elimination to generate a single-strand break at the site of the removed base with both 3'- and 5'-phosphates. This is Formamidopyrimidine-DNA glycosylase from Rhodospirillum rubrum (strain ATCC 11170 / ATH 1.1.1 / DSM 467 / LMG 4362 / NCIMB 8255 / S1).